A 133-amino-acid polypeptide reads, in one-letter code: Putative nickel-responsive regulator (133 aa).

Ni(2+) contacts are provided by H74, H85, H87, and C93.

This sequence belongs to the transcriptional regulatory CopG/NikR family. Ni(2+) serves as cofactor.

Its function is as follows. Transcriptional regulator. The polypeptide is Putative nickel-responsive regulator (Saccharolobus solfataricus (strain ATCC 35092 / DSM 1617 / JCM 11322 / P2) (Sulfolobus solfataricus)).